The following is a 138-amino-acid chain: Small ribosomal subunit protein uS11 (138 aa).

Positions 1-12 (MAQAKKGGTAAK) are enriched in low complexity. Disordered regions lie at residues 1-32 (MAQA…AAHI) and 119-138 (ISDV…RRRV). The segment covering 13-22 (KGQKTRRREK) has biased composition (basic residues).

Belongs to the universal ribosomal protein uS11 family. As to quaternary structure, part of the 30S ribosomal subunit. Interacts with proteins S7 and S18. Binds to IF-3.

Located on the platform of the 30S subunit, it bridges several disparate RNA helices of the 16S rRNA. Forms part of the Shine-Dalgarno cleft in the 70S ribosome. This Mycolicibacterium smegmatis (strain ATCC 700084 / mc(2)155) (Mycobacterium smegmatis) protein is Small ribosomal subunit protein uS11.